The following is a 58-amino-acid chain: Small ribosomal subunit protein bS21 (58 aa).

Residues 31-58 (DLKRIRHHETPVEKYKRKAQQRRRSRRR) are disordered. Positions 45–58 (YKRKAQQRRRSRRR) are enriched in basic residues.

Belongs to the bacterial ribosomal protein bS21 family.

This is Small ribosomal subunit protein bS21 from Prochlorococcus marinus (strain MIT 9303).